A 354-amino-acid polypeptide reads, in one-letter code: Uroporphyrinogen decarboxylase (354 aa).

Substrate-binding positions include 27–31 (RQAGR), Asp-77, Tyr-154, Thr-209, and His-327.

The protein belongs to the uroporphyrinogen decarboxylase family. In terms of assembly, homodimer.

It localises to the cytoplasm. The enzyme catalyses uroporphyrinogen III + 4 H(+) = coproporphyrinogen III + 4 CO2. The protein operates within porphyrin-containing compound metabolism; protoporphyrin-IX biosynthesis; coproporphyrinogen-III from 5-aminolevulinate: step 4/4. In terms of biological role, catalyzes the decarboxylation of four acetate groups of uroporphyrinogen-III to yield coproporphyrinogen-III. This chain is Uroporphyrinogen decarboxylase, found in Serratia proteamaculans (strain 568).